The primary structure comprises 209 residues: Tumor suppressor candidate gene 1 protein (209 aa).

Disordered stretches follow at residues 1 to 55 (MWRM…DGAR), 111 to 157 (ALRL…LRAR), and 172 to 209 (LHLE…GPWL). Residues 14 to 47 (CCGGDGAADGRGPGRSGRARGGGSPSGGGGGVGW) are compositionally biased toward gly residues. Residues 70–114 (LEAIRARDEWDRQNARLRQENARLRLENRRLKRENRSLFRQALRL) are a coiled coil. The segment covering 125–149 (EARRVPEEASTNRRARDSGREDEPG) has biased composition (basic and acidic residues). Serine 150 carries the phosphoserine modification. Residues 152-177 (RALRARLEKLEAMYRRALLQLHLEQR) are a coiled coil. Over residues 174-188 (LEQRGPRPSGDKEEQ) the composition is skewed to basic and acidic residues.

In terms of tissue distribution, widely expressed at low level. Expressed at higher level in testis, weakly expressed in muscle, colon, lung and spleen. Not detected in 3 non small cell lung carcinoma (NSCLC) cell lines with homozygous deletion of the 9p region, while it is down-regulated in 3 other tumor cell lines.

In Homo sapiens (Human), this protein is Tumor suppressor candidate gene 1 protein (TUSC1).